Here is a 195-residue protein sequence, read N- to C-terminus: 3-isopropylmalate dehydratase small subunit (195 aa).

The protein belongs to the LeuD family. LeuD type 1 subfamily. Heterodimer of LeuC and LeuD.

The enzyme catalyses (2R,3S)-3-isopropylmalate = (2S)-2-isopropylmalate. It functions in the pathway amino-acid biosynthesis; L-leucine biosynthesis; L-leucine from 3-methyl-2-oxobutanoate: step 2/4. Its function is as follows. Catalyzes the isomerization between 2-isopropylmalate and 3-isopropylmalate, via the formation of 2-isopropylmaleate. This chain is 3-isopropylmalate dehydratase small subunit, found in Oenococcus oeni (strain ATCC BAA-331 / PSU-1).